Reading from the N-terminus, the 325-residue chain is Tetraacyldisaccharide 4'-kinase (325 aa).

55–62 (TAGGNGKT) lines the ATP pocket.

Belongs to the LpxK family.

The enzyme catalyses a lipid A disaccharide + ATP = a lipid IVA + ADP + H(+). It participates in glycolipid biosynthesis; lipid IV(A) biosynthesis; lipid IV(A) from (3R)-3-hydroxytetradecanoyl-[acyl-carrier-protein] and UDP-N-acetyl-alpha-D-glucosamine: step 6/6. Its function is as follows. Transfers the gamma-phosphate of ATP to the 4'-position of a tetraacyldisaccharide 1-phosphate intermediate (termed DS-1-P) to form tetraacyldisaccharide 1,4'-bis-phosphate (lipid IVA). This is Tetraacyldisaccharide 4'-kinase from Enterobacter sp. (strain 638).